A 2430-amino-acid chain; its full sequence is MAAQPGPGSAASPGCAGAMERVLPMLLVRIPAEETAQLGPRAQLHRELEALGSLTAAGSLQVLSLAPGSRGGSSCCLPGPFRQFLWEESQNSTSRDRPKLLVAREDYELLVYEFDLRDGRCDAALLHGCCGRTLQKLTEDQGVSISFKSLRILSFHNNTSLLLINRCLILRVVFPGKEPGVPVLDCLSLPLPAQAADMIIDAQLCERFLFVLSTVGLIYIFNTMDGTQVAQVDLALLREDSEQLEPASVSSFTSLRVSQDLDVLVLVSSASTAVALNLHLYFRQHPGHLLCEGTLEDLPIEGPPGIDEDDLVNSAHNMKLSKVSFQVDRSWRAQLLSLNESVRGSEPEVSCCAPWFQSALRLESLESADHTPTVPTHVFIPGDVPRGRCAFPQKEHVKSSDPGRPWKTMHLSEHEQPTELTCLSVTGFTALFTWAVGATSCTIGLWDLETQSMQCFSLSQKCTPVDIGGDQQLCLALTDDGLSLILFGLTQEEFLNRLMIHGSASTVDSLCHLNGWGRCSIPIHALEAGIENRQLDTVDFFLKSKENLLTPSSQSPAPDQQHPFSSHLYLRQVEEMSPALDLLCSAIRESDSETQSKHFAEQLLHLTLSFLNKQIRELCVHTEELDEHFQKGVAILTSYINELRTFMIKFPWKPGDAIDESDVNEGVVTVKEDRVWEELSFEEVIADAILNNRIPEAQTFFRISGHSAQRLEELVRIGLDLAFDSLKKNNVEEASRLLRNMGFSVEDELLKICFYTTDKNIRDFLVEILKEKECFSEKERRTVDFVHQLEALYSGHFQENAQTQAFPRYWIKEQDCFKHKSVLDTFLKYDKKDEFHKQDHRIALNWAHRWDLQTQECILLRRLSPEEYKARSPEALWRHLTARHDCSSISLWMEEFQTQETESPQQSKWPPLSADIIEQGTCCHSHMRNEILDKLARSGIFLASELEDFERLLLRLSRIGGVMQDSLPVQSYKSRAGCDFHSRFILYCLEHGLQHLLYTYLDYYKLSPGNCPFLEKKELHEAHPWLEFLVQCRQVSSNLTDPKLIFQASLANAQILIPTNQASVSSMLLEGHTLLALATTMYAPGGVSQVIQNEDSENCLKKVDPQLLKVALTPYPKLKAALFPQYTAPSILPSDITLYHLIQSLPPFDPSRLFVWQSANTLAIGDTGSQLPHFSSPDLVSKYAVLERLNYAYYLHHGRPSFAFGTFLVQELIKSKTPKQLIQQVGKEAYTLGLSSFTNPSVGAACVCFLELLGLSSLKLRVDLKMANVILGSKRRDEDARSSFIRESLAEKLSKLADGDRAATEELLVLLEEGVWDSIEQQGFSRLSSESSSQWALVLQFCMLHDRKLSVSYLRECAKANDWLQFLVHSQLHNYHPAEVESLLQYFSPVLQSHLKLASEKLSSGSISRDDSCLQELQKNKGETSNFFEILHRCSDESTSWSWLLAEAVRHRAPILSVLASCVQGASVVSCLCVWIVTSVEDKVAAEAMGHIQISVEDHHWSLKDLSIIWRTVLTRRKSHTLIRGFQLFIKDSPLLLIMEMYELCMFFKNYEKAKVKLLEFQKSLETLDTVAARVLPIIPASWMKDQVCFLLKLMPQQCETQYELGKLLQLFVGTEQLFSDGPDVQKLCLLSQVLKDTPIAISPAVISSYSTENFQRECRSILEKLKADGQFAVARRVAELAALPVDSLLIEQLTQEMQTLTHTPQWSLKQERLGFWKKCHEIFKKNSISKRAASSFFSSQAPEVSEHPAEQGSLEERHLLLTLAGHWLAQEEPVPVEELEGLEKQIWICRVAQHTCGGAEEEAKPSLSQHKLAAAELSFDSLASELSFSKLAALNTSKYLGLNDLPSKTTCENRLKHKEQESLNTLIGQLLDGGCVHEASRVCQYFRFYSQDLVLVLHCRALASAEATMEDLHSEIRALLSSAAQPEDLESPSVPLRKAHSSSSLDSQSFVMVPPTDEVAQNLHTLISKCLHGKNYCRQVLCLYELAKDLGCSYGDVAARDSEAMLRAILASQRPDRCRQAQVFINTQGLEADTVAELVAEEVTRELLTPSEGTGEKQPFNPAEESQTFLQLTALCQDRTLVGMKLLDKIPSVPHGELSCTTELLILAHHCFTFTCHMEGITRVLQAARMLTDNHLAPNEEYGLVVRLLTGIGRYNEMTYIFDLLHQKHYFEVLMRKKLDPTGTLKTALLDYIKRCRPGDSEKHNMIALCFSMCREIGENHEAAACIQLKLIESQPWEESLKDGAQLKQLLLKALTLMLDAAESYAKDSCVRQALHCNRLTKLITLQIHFLNSGQNTMLINLGHQKLMDCIMTLPRFYQASIVAEAYDFVPDWAEVLYQQVILKGDFSYLEEFKQQKLLRPNIFEDISKKYKQHQPTDRVTENLKKLLSYCEDIYLYYKLAYEHKFFEIVNMLLKDPQTGCCLKDMLAG.

A phosphoserine mark is found at Ser1942 and Ser1943.

In terms of assembly, interacts with AP5Z1, AP5B1, AP5S1 and ZFYVE26. As to expression, ubiquitously expressed at low level. Expressed in embryonic and adult cortical projection neurons.

It localises to the cytoplasm. Its subcellular location is the cytosol. The protein resides in the nucleus. It is found in the cell projection. The protein localises to the axon. It localises to the dendrite. Its subcellular location is the synapse. Its function is as follows. May play a role in neurite plasticity by maintaining cytoskeleton stability and regulating synaptic vesicle transport. The chain is Spatacsin (Spg11) from Mus musculus (Mouse).